We begin with the raw amino-acid sequence, 346 residues long: MIRNLYYEEQALMILNQNCLPEELVYERCERPEEVVAAIKGLKVRGAPLIGVTAAFGLAMAFSGYSGTGEARDVYFSRMKELFAATRPTAVNLFWALERMERVYRENHHLSPEELARRLCQEAQNLYKEDIRVNEAIGEQGQELLGEGSRVMTICNAGALATCGYGTALGVIRSAARRNKIEMVWACETRPVLQGSRLTVWELWQDKIPVTLLTDNMAGYTMSLGKVDAVITGADRIATNGDTANKIGTYSLAVLAKYHGIPFYVAAPLSTFDWNIKQGGEIPIEERSAEEVRTIKGSCLTVPVVDVFNPAFDITPEHLITAIICEKGIIRPPFGAAIKIWGREGE.

Residues 45–47, Arg87, and Gln194 contribute to the substrate site; that span reads RGA. Asp235 (proton donor) is an active-site residue. 245 to 246 contacts substrate; sequence NK.

It belongs to the eIF-2B alpha/beta/delta subunits family. MtnA subfamily.

It catalyses the reaction 5-(methylsulfanyl)-alpha-D-ribose 1-phosphate = 5-(methylsulfanyl)-D-ribulose 1-phosphate. Its pathway is amino-acid biosynthesis; L-methionine biosynthesis via salvage pathway; L-methionine from S-methyl-5-thio-alpha-D-ribose 1-phosphate: step 1/6. In terms of biological role, catalyzes the interconversion of methylthioribose-1-phosphate (MTR-1-P) into methylthioribulose-1-phosphate (MTRu-1-P). This is Methylthioribose-1-phosphate isomerase from Syntrophomonas wolfei subsp. wolfei (strain DSM 2245B / Goettingen).